The chain runs to 842 residues: Alanine--tRNA ligase (842 aa).

The Zn(2+) site is built by His-549, His-553, Cys-650, and His-654.

It belongs to the class-II aminoacyl-tRNA synthetase family. Zn(2+) is required as a cofactor.

The protein resides in the cytoplasm. It carries out the reaction tRNA(Ala) + L-alanine + ATP = L-alanyl-tRNA(Ala) + AMP + diphosphate. Catalyzes the attachment of alanine to tRNA(Ala) in a two-step reaction: alanine is first activated by ATP to form Ala-AMP and then transferred to the acceptor end of tRNA(Ala). Also edits incorrectly charged Ser-tRNA(Ala) and Gly-tRNA(Ala) via its editing domain. This is Alanine--tRNA ligase from Campylobacter jejuni subsp. jejuni serotype O:6 (strain 81116 / NCTC 11828).